We begin with the raw amino-acid sequence, 413 residues long: MPSSISWGLLLLAALSCLGPGSLAQDAQETEASKQDQEHPASHKIAPHLAEFALSFYRVLARQSNTTNIFFSPVSIATALAMLSLGTKGDTHTQILEGLDFNLTEMAEADIHQGFQHLLQTLNRPNTQLQLTSGNGLFIDRNLKLLDKFLEDVKSLYHSEAFSTNFTNTEEARQQINSYVEKGTKGKIVELLKELDRDTVLALVNYIFFKGKWKQPFNEEQTREKDFHVDEATTVRVPMMNRLGMFHLHHCSTLASWVLQMDYLGNATAIFLLPDKGKMRHLEDTVTTEILTKFLKNRETTKSQLYFPKVSISGTYDLKDVLSSLGITKVFSSEADLSGVTEEAPLTVSKALHKAVLDIDEEGTEAAGGTVLGNIRSILRYEVIFDRPFLVVIYEHHTKSPLFVGKVVNPTQQ.

Residues 1–24 form the signal peptide; the sequence is MPSSISWGLLLLAALSCLGPGSLA. Residue glutamine 25 is modified to Pyrrolidone carboxylic acid. N-linked (GlcNAc...) asparagine glycosylation is found at asparagine 65, asparagine 102, asparagine 165, and asparagine 266. The tract at residues 368–387 is RCL; it reads GGTVLGNIRSILRYEVIFDR.

It belongs to the serpin family. Expressed in liver.

The polypeptide is Alpha-1-antitrypsin-like protein CM55-SI (Tamias sibiricus (Siberian chipmunk)).